The following is a 67-amino-acid chain: Protein SlyX homolog (67 aa).

It belongs to the SlyX family.

The protein is Protein SlyX homolog of Thiobacillus denitrificans (strain ATCC 25259 / T1).